A 726-amino-acid polypeptide reads, in one-letter code: Catalase-peroxidase (726 aa).

Positions 96 to 224 (WHSAGTYRIA…LAAVMMGLIY (129 aa)) form a cross-link, tryptophyl-tyrosyl-methioninium (Trp-Tyr) (with M-250). Histidine 97 (proton acceptor) is an active-site residue. The segment at residues 224-250 (YVNPEGVDGKPDPLKTAHDMRVTFARM) is a cross-link (tryptophyl-tyrosyl-methioninium (Tyr-Met) (with W-96)). Histidine 265 provides a ligand contact to heme b.

Belongs to the peroxidase family. Peroxidase/catalase subfamily. As to quaternary structure, homodimer or homotetramer. Heme b serves as cofactor. In terms of processing, formation of the three residue Trp-Tyr-Met cross-link is important for the catalase, but not the peroxidase activity of the enzyme.

The catalysed reaction is H2O2 + AH2 = A + 2 H2O. The enzyme catalyses 2 H2O2 = O2 + 2 H2O. Functionally, bifunctional enzyme with both catalase and broad-spectrum peroxidase activity. This chain is Catalase-peroxidase, found in Vibrio campbellii (strain ATCC BAA-1116).